Consider the following 369-residue polypeptide: uncharacterized protein (369 aa).

An N6-(pyridoxal phosphate)lysine modification is found at Lys-184.

Belongs to the class-V pyridoxal-phosphate-dependent aminotransferase family. Pyridoxal 5'-phosphate is required as a cofactor.

This is an uncharacterized protein from Helicobacter pylori (strain ATCC 700392 / 26695) (Campylobacter pylori).